The chain runs to 187 residues: Elongation factor P (187 aa).

This sequence belongs to the elongation factor P family.

The protein localises to the cytoplasm. It participates in protein biosynthesis; polypeptide chain elongation. Functionally, involved in peptide bond synthesis. Stimulates efficient translation and peptide-bond synthesis on native or reconstituted 70S ribosomes in vitro. Probably functions indirectly by altering the affinity of the ribosome for aminoacyl-tRNA, thus increasing their reactivity as acceptors for peptidyl transferase. In Erythrobacter litoralis (strain HTCC2594), this protein is Elongation factor P.